The following is a 600-amino-acid chain: Aspartate--tRNA(Asp/Asn) ligase (600 aa).

Residue glutamate 174 participates in L-aspartate binding. Residues 198-201 (QLFK) are aspartate. Arginine 220 contributes to the L-aspartate binding site. ATP is bound by residues 220–222 (RDE) and glutamine 229. Position 457 (histidine 457) interacts with L-aspartate. Glutamate 491 contributes to the ATP binding site. Arginine 498 provides a ligand contact to L-aspartate. Residue 543 to 546 (GLDR) participates in ATP binding.

Belongs to the class-II aminoacyl-tRNA synthetase family. Type 1 subfamily. As to quaternary structure, homodimer.

It localises to the cytoplasm. It carries out the reaction tRNA(Asx) + L-aspartate + ATP = L-aspartyl-tRNA(Asx) + AMP + diphosphate. In terms of biological role, aspartyl-tRNA synthetase with relaxed tRNA specificity since it is able to aspartylate not only its cognate tRNA(Asp) but also tRNA(Asn). Reaction proceeds in two steps: L-aspartate is first activated by ATP to form Asp-AMP and then transferred to the acceptor end of tRNA(Asp/Asn). The chain is Aspartate--tRNA(Asp/Asn) ligase from Burkholderia orbicola (strain AU 1054).